Here is an 806-residue protein sequence, read N- to C-terminus: MFGNEMDDTRDPLQYGYQRVNTGEGSLSTSTTGTSLDTIVLDTNAEDLNSTPRVGAQRTFSPILETDDTNPFLDPPPPGQKSPPAVGEAKAKSKSSLKGSRVSFDQEDRFDETDEGFRKQREHFQKHKSHSTSEHKNQLIKELRHLLAADNRRQFQGKKHVSLDVQSSKVLEELLKASSSEDDFEGQRKQFQERKHKSLDARHISFKFEKEPTPSSSEEDFEPSTSLLKIDADITKPVIIDLKVNRAQSDQALTQFQKNLAHFQDLESSEDEDYISSRKHFQQAKSMSTDSRKSNKSIRFFEMEMGTKEENIRTAVPFVRQITEDGKPKLEVYRPTTNPIFIWTQVLAALSVSLGSMVVGFSSAYTSPALVSMKDRNITSFEVTDQSGSWVGGIMPLAGLAGGILGGPLIEYLGRKNTILATATPFIISWLLIACATHVAMVLVGRALSGFSVGVASLSLPVYLGETVQPEVRGTLGLLPTAFGNIGILLCFVAGKYMDWSGLAFLGAALPIPFLLLMFLIPETPRWYVSRGRDDRARKALQWLRGKKADVDPELKGIIKSHQDAERHASQSAMLDLMKKANLKPLLISLGLMFFQQLSGINAVIFYTVQIFQDAGSTIDENLCTIIVGVVNFIATFIATMLIDRLGRKMLLYISDVAMIITLMTLGGFFYVKNSGQDVSQVGWLPLAAFVIYVLGFSLGFGPIPWLMMGEILPGKIRGSAASVATAFNWSCTFIVTKTFADIINAIGTHGTFWMFGSICVIGLAFVIFYVPETQGKSLEDIERKMMGRVRRMSSVANIKPLSFNM.

Disordered regions lie at residues 1–34 and 48–138; these read MFGNEMDDTRDPLQYGYQRVNTGEGSLSTSTTGT and LNST…HKNQ. The Cytoplasmic portion of the chain corresponds to 1-339; the sequence is MFGNEMDDTR…LEVYRPTTNP (339 aa). Residues 25–34 are compositionally biased toward low complexity; it reads GSLSTSTTGT. Residues 340-360 form a helical membrane-spanning segment; the sequence is IFIWTQVLAALSVSLGSMVVG. Residues 361–389 lie on the Extracellular side of the membrane; the sequence is FSSAYTSPALVSMKDRNITSFEVTDQSGS. N-linked (GlcNAc...) asparagine glycosylation is present at asparagine 377. A helical membrane pass occupies residues 390–410; the sequence is WVGGIMPLAGLAGGILGGPLI. Over 411 to 424 the chain is Cytoplasmic; it reads EYLGRKNTILATAT. The helical transmembrane segment at 425–445 threads the bilayer; it reads PFIISWLLIACATHVAMVLVG. Over 446-447 the chain is Extracellular; sequence RA. Residues 448–468 traverse the membrane as a helical segment; that stretch reads LSGFSVGVASLSLPVYLGETV. The Cytoplasmic segment spans residues 469–473; it reads QPEVR. A helical transmembrane segment spans residues 474 to 494; it reads GTLGLLPTAFGNIGILLCFVA. Residues 495-501 are Extracellular-facing; it reads GKYMDWS. The chain crosses the membrane as a helical span at residues 502–522; that stretch reads GLAFLGAALPIPFLLLMFLIP. Residues 523-585 are Cytoplasmic-facing; sequence ETPRWYVSRG…DLMKKANLKP (63 aa). Residues 586–606 traverse the membrane as a helical segment; the sequence is LLISLGLMFFQQLSGINAVIF. Residues 607 to 622 lie on the Extracellular side of the membrane; that stretch reads YTVQIFQDAGSTIDEN. The helical transmembrane segment at 623-643 threads the bilayer; sequence LCTIIVGVVNFIATFIATMLI. Residues 644–649 are Cytoplasmic-facing; sequence DRLGRK. Residues 650–670 form a helical membrane-spanning segment; sequence MLLYISDVAMIITLMTLGGFF. Residues 671–681 lie on the Extracellular side of the membrane; sequence YVKNSGQDVSQ. The chain crosses the membrane as a helical span at residues 682 to 702; it reads VGWLPLAAFVIYVLGFSLGFG. Residues 703–723 are Cytoplasmic-facing; the sequence is PIPWLMMGEILPGKIRGSAAS. A helical membrane pass occupies residues 724–744; the sequence is VATAFNWSCTFIVTKTFADII. Topologically, residues 745-750 are extracellular; it reads NAIGTH. The chain crosses the membrane as a helical span at residues 751–771; the sequence is GTFWMFGSICVIGLAFVIFYV. At 772 to 806 the chain is on the cytoplasmic side; that stretch reads PETQGKSLEDIERKMMGRVRRMSSVANIKPLSFNM.

It belongs to the major facilitator superfamily. Sugar transporter (TC 2.A.1.1) family. Trehalose transporter subfamily.

The protein resides in the cell membrane. In terms of biological role, high-capacity facilitative transporter for trehalose. Does not transport maltose, sucrose or lactose. Mediates the bidirectional transfer of trehalose. Responsible for the transport of trehalose synthesized in the fat body and the incorporation of trehalose into other tissues that require a carbon source, thereby regulating trehalose levels in the hemolymph. The protein is Facilitated trehalose transporter Tret1 of Aedes aegypti (Yellowfever mosquito).